Consider the following 251-residue polypeptide: 2,3-bisphosphoglycerate-dependent phosphoglycerate mutase (251 aa).

Substrate-binding positions include arginine 11 to asparagine 18, threonine 24 to glycine 25, arginine 63, glutamate 90 to tyrosine 93, lysine 101, arginine 117 to arginine 118, and glycine 184 to asparagine 185. Histidine 12 acts as the Tele-phosphohistidine intermediate in catalysis. The active-site Proton donor/acceptor is the glutamate 90.

The protein belongs to the phosphoglycerate mutase family. BPG-dependent PGAM subfamily.

The catalysed reaction is (2R)-2-phosphoglycerate = (2R)-3-phosphoglycerate. It participates in carbohydrate degradation; glycolysis; pyruvate from D-glyceraldehyde 3-phosphate: step 3/5. In terms of biological role, catalyzes the interconversion of 2-phosphoglycerate and 3-phosphoglycerate. This is 2,3-bisphosphoglycerate-dependent phosphoglycerate mutase from Mycobacterium ulcerans (strain Agy99).